The chain runs to 620 residues: Glutathione-regulated potassium-efflux system protein KefC (620 aa).

Topologically, residues 1–3 (MDS) are periplasmic. Residues 4 to 24 (HTLVQALIYLGSAALIVPIAV) traverse the membrane as a helical segment. Residue Arg-25 is a topological domain, cytoplasmic. The helical transmembrane segment at 26–46 (LGLGSVLGYLIAGCIIGPWGL) threads the bilayer. Topologically, residues 47–53 (RLVTDAE) are periplasmic. Residues 54 to 74 (SILHFAEIGVVLMLFIIGLEL) traverse the membrane as a helical segment. Over 75 to 89 (DPQRLWKLRAAVFGG) the chain is Cytoplasmic. Residues 90–110 (GALQMVICGGLLGLFCMLLGL) form a helical membrane-spanning segment. Topologically, residues 111-113 (RWQ) are periplasmic. The chain crosses the membrane as a helical span at residues 114–134 (VAELIGMTLALSSTAIAMQAM). Over 135–148 (NERNLMVTQMGRSA) the chain is Cytoplasmic. A helical membrane pass occupies residues 149–169 (FAVLLFQDIAAIPLVAMIPLL). Topologically, residues 170 to 177 (AASSASTT) are periplasmic. A helical membrane pass occupies residues 178–198 (MGAFALSALKVAGALVLVVLL). Over 199–213 (GRYVTRPALRFVARS) the chain is Cytoplasmic. A helical transmembrane segment spans residues 214–233 (GLREVFSAVALFLVFGFGLL). Residues 234–236 (LEE) are Periplasmic-facing. A helical membrane pass occupies residues 237 to 254 (VGLSMAMGAFLAGVLLAS). Over 255–269 (SEYRHALESDIEPFK) the chain is Cytoplasmic. A helical transmembrane segment spans residues 270 to 290 (GLLLGLFFIGVGMSIDFGTLI). At 291–293 (ENP) the chain is on the periplasmic side. The helical transmembrane segment at 294 to 314 (LRIVILLLGFLIIKIAMLWLI) threads the bilayer. Over 315–326 (ARPLQVPNKQRR) the chain is Cytoplasmic. The helical transmembrane segment at 327-347 (WFAVLLGQGSEFAFVVFGAAQ) threads the bilayer. At 348-358 (MANVLEPEWAK) the chain is on the periplasmic side. Residues 359-379 (SLTLAVALSMAATPILLVILN) form a helical membrane-spanning segment. The Cytoplasmic segment spans residues 380–620 (RLEQSSTEEA…ADEPETKPSS (241 aa)). The RCK N-terminal domain occupies 399 to 518 (QPRVIIAGFG…AGVEKPERET (120 aa)). The disordered stretch occupies residues 597 to 620 (GWQGTEEGKHTGNMADEPETKPSS).

The protein belongs to the monovalent cation:proton antiporter 2 (CPA2) transporter (TC 2.A.37) family. KefC subfamily. As to quaternary structure, homodimer. Interacts with the regulatory subunit KefF.

It localises to the cell inner membrane. In terms of biological role, pore-forming subunit of a potassium efflux system that confers protection against electrophiles. Catalyzes K(+)/H(+) antiport. This Shigella flexneri protein is Glutathione-regulated potassium-efflux system protein KefC.